Here is a 393-residue protein sequence, read N- to C-terminus: S-adenosylmethionine synthase (393 aa).

ATP is bound at residue His16. Position 18 (Asp18) interacts with Mg(2+). Glu44 is a K(+) binding site. Residues Glu57 and Gln100 each coordinate L-methionine. The tract at residues Gln100–Gly110 is flexible loop. Residues Asp165–Lys167, Arg231–Phe232, Asp240, Arg246–Lys247, and Lys267 each bind ATP. Asp240 is a binding site for L-methionine. Position 271 (Lys271) interacts with L-methionine.

It belongs to the AdoMet synthase family. In terms of assembly, homotetramer; dimer of dimers. The cofactor is Mg(2+). It depends on K(+) as a cofactor.

It is found in the cytoplasm. The enzyme catalyses L-methionine + ATP + H2O = S-adenosyl-L-methionine + phosphate + diphosphate. It functions in the pathway amino-acid biosynthesis; S-adenosyl-L-methionine biosynthesis; S-adenosyl-L-methionine from L-methionine: step 1/1. Catalyzes the formation of S-adenosylmethionine (AdoMet) from methionine and ATP. The overall synthetic reaction is composed of two sequential steps, AdoMet formation and the subsequent tripolyphosphate hydrolysis which occurs prior to release of AdoMet from the enzyme. The polypeptide is S-adenosylmethionine synthase (Coxiella burnetii (strain CbuG_Q212) (Coxiella burnetii (strain Q212))).